The chain runs to 337 residues: Ketol-acid reductoisomerase (NADP(+)) (337 aa).

In terms of domain architecture, KARI N-terminal Rossmann spans 3 to 183; it reads VEMFYDDDAD…GGTRAGVIKT (181 aa). NADP(+) contacts are provided by residues 26 to 29, Ser52, Ser54, and 84 to 87; these read YGSQ and DTAQ. His109 is a catalytic residue. Gly135 contributes to the NADP(+) binding site. One can recognise a KARI C-terminal knotted domain in the interval 184–329; that stretch reads TFKEETETDL…AKLRGLMSWV (146 aa). Mg(2+) contacts are provided by Asp192, Glu196, Glu228, and Glu232. Substrate is bound at residue Ser253.

This sequence belongs to the ketol-acid reductoisomerase family. It depends on Mg(2+) as a cofactor.

It carries out the reaction (2R)-2,3-dihydroxy-3-methylbutanoate + NADP(+) = (2S)-2-acetolactate + NADPH + H(+). The enzyme catalyses (2R,3R)-2,3-dihydroxy-3-methylpentanoate + NADP(+) = (S)-2-ethyl-2-hydroxy-3-oxobutanoate + NADPH + H(+). It functions in the pathway amino-acid biosynthesis; L-isoleucine biosynthesis; L-isoleucine from 2-oxobutanoate: step 2/4. It participates in amino-acid biosynthesis; L-valine biosynthesis; L-valine from pyruvate: step 2/4. Its function is as follows. Involved in the biosynthesis of branched-chain amino acids (BCAA). Catalyzes an alkyl-migration followed by a ketol-acid reduction of (S)-2-acetolactate (S2AL) to yield (R)-2,3-dihydroxy-isovalerate. In the isomerase reaction, S2AL is rearranged via a Mg-dependent methyl migration to produce 3-hydroxy-3-methyl-2-ketobutyrate (HMKB). In the reductase reaction, this 2-ketoacid undergoes a metal-dependent reduction by NADPH to yield (R)-2,3-dihydroxy-isovalerate. The protein is Ketol-acid reductoisomerase (NADP(+)) of Nocardia farcinica (strain IFM 10152).